Here is a 327-residue protein sequence, read N- to C-terminus: Thiamine thiazole synthase (327 aa).

Substrate is bound by residues C86, E107–A108, G115, and V182. C216 carries the 2,3-didehydroalanine (Cys) modification. Residues D218, H233, M285, and R295–G297 each bind substrate.

The protein belongs to the THI4 family. In terms of assembly, homooctamer. The cofactor is Fe cation. In terms of processing, during the catalytic reaction, a sulfide is transferred from Cys-216 to a reaction intermediate, generating a dehydroalanine residue.

It is found in the cytoplasm. The protein resides in the nucleus. It carries out the reaction [ADP-thiazole synthase]-L-cysteine + glycine + NAD(+) = [ADP-thiazole synthase]-dehydroalanine + ADP-5-ethyl-4-methylthiazole-2-carboxylate + nicotinamide + 3 H2O + 2 H(+). Involved in biosynthesis of the thiamine precursor thiazole. Catalyzes the conversion of NAD and glycine to adenosine diphosphate 5-(2-hydroxyethyl)-4-methylthiazole-2-carboxylic acid (ADT), an adenylated thiazole intermediate. The reaction includes an iron-dependent sulfide transfer from a conserved cysteine residue of the protein to a thiazole intermediate. The enzyme can only undergo a single turnover, which suggests it is a suicide enzyme. May have additional roles in adaptation to various stress conditions and in DNA damage tolerance. In Aspergillus oryzae (strain ATCC 42149 / RIB 40) (Yellow koji mold), this protein is Thiamine thiazole synthase.